A 608-amino-acid chain; its full sequence is Formate hydrogenlyase subunit 3 (608 aa).

12 consecutive transmembrane segments (helical) span residues 10–26, 44–67, 76–93, 116–140, 153–173, 197–218, 229–251, 258–280, 296–312, 416–440, 453–476, and 502–521; these read GVAW…LFSF, LYTA…LSLV, LNAI…FVSL, AAAV…MALC, LWFA…WLLW, IWLL…HGWV, AAAL…LSLL, WWGI…YALV, IGII…GIAL, LAVG…VTFL, CAPL…GVAA, and MITL…MAIC.

Belongs to the complex I subunit 4 family. FHL comprises of a formate dehydrogenase, unidentified electron carriers and a hydrogenase (isoenzyme 3). In this non-energy conserving pathway molecular hydrogen and carbodioxide from formate are released.

It localises to the cell inner membrane. The sequence is that of Formate hydrogenlyase subunit 3 (hycC) from Escherichia coli (strain K12).